An 85-amino-acid chain; its full sequence is MTLTMSTVVFFSLILLTLGLQPKDKDEGVMGRSRLGKRGLLMRSLDEELKSNDCPEYCPHGNECCEHHECRYDPWSRELKCLDSR.

The signal sequence occupies residues 1–20 (MTLTMSTVVFFSLILLTLGL). Residues 21 to 43 (QPKDKDEGVMGRSRLGKRGLLMR) constitute a propeptide that is removed on maturation. Disulfide bonds link Cys54-Cys65, Cys58-Cys70, and Cys64-Cys81.

In terms of tissue distribution, expressed by the venom duct.

It localises to the secreted. This chain is Augerpeptide-s6a, found in Terebra subulata (Chocolate spotted auger).